The chain runs to 264 residues: Putative hydroxypyruvate isomerase (264 aa).

Catalysis depends on proton donor/acceptor residues glutamate 145 and glutamate 243.

This sequence belongs to the hyi family.

It carries out the reaction 3-hydroxypyruvate = 2-hydroxy-3-oxopropanoate. Catalyzes the reversible isomerization between hydroxypyruvate and 2-hydroxy-3-oxopropanoate (also termed tartronate semialdehyde). This is Putative hydroxypyruvate isomerase (Gip) from Drosophila melanogaster (Fruit fly).